The sequence spans 270 residues: Chlorophyll a-b binding protein 7, chloroplastic (270 aa).

Residues 1–42 constitute a chloroplast transit peptide; the sequence is MASACASSTIAAVAFSSPSSRRNGSIVGTTKASFLGGRRLRV. Residue tryptophan 68 participates in chlorophyll b binding. Chlorophyll a is bound by residues phenylalanine 88, glutamate 107, and histidine 110. Arginine 112 contributes to the chlorophyll b binding site. Residues 113–133 form a helical membrane-spanning segment; it reads WAMLGAAGIFIPELLTKIGIL. Position 144 (glutamine 144) interacts with chlorophyll a. Residues 146–166 traverse the membrane as a helical segment; the sequence is YFTDTTTLFIVELVLIGWAEG. Residues isoleucine 155, glutamate 165, and arginine 168 each coordinate chlorophyll b. Chlorophyll a contacts are provided by lysine 221, glutamate 222, asparagine 225, arginine 227, glutamine 239, and histidine 254. The helical transmembrane segment at 228-248 threads the bilayer; it reads LAMLAVMGAWFQHIYTGTGPI.

This sequence belongs to the light-harvesting chlorophyll a/b-binding (LHC) protein family. As to quaternary structure, the LHC complex consists of chlorophyll a-b binding proteins. Binds at least 14 chlorophylls (8 Chl-a and 6 Chl-b) and carotenoids such as lutein and neoxanthin. serves as cofactor. Photoregulated by reversible phosphorylation of its threonine residues.

It localises to the plastid. The protein resides in the chloroplast thylakoid membrane. In terms of biological role, the light-harvesting complex (LHC) functions as a light receptor, it captures and delivers excitation energy to photosystems with which it is closely associated. The chain is Chlorophyll a-b binding protein 7, chloroplastic (CAB7) from Solanum lycopersicum (Tomato).